A 132-amino-acid polypeptide reads, in one-letter code: ATP synthase epsilon chain, chloroplastic (132 aa).

It belongs to the ATPase epsilon chain family. As to quaternary structure, F-type ATPases have 2 components, CF(1) - the catalytic core - and CF(0) - the membrane proton channel. CF(1) has five subunits: alpha(3), beta(3), gamma(1), delta(1), epsilon(1). CF(0) has three main subunits: a, b and c.

It is found in the plastid. It localises to the chloroplast thylakoid membrane. Functionally, produces ATP from ADP in the presence of a proton gradient across the membrane. The polypeptide is ATP synthase epsilon chain, chloroplastic (Adiantum capillus-veneris (Maidenhair fern)).